Reading from the N-terminus, the 62-residue chain is Photosystem II reaction center protein Z (62 aa).

The next 2 membrane-spanning stretches (helical) occupy residues 8–28 (AVFALIITSSILLISVPVVFA) and 41–61 (FSGTSLWIGLVFLVGILNSLI).

It belongs to the PsbZ family. In terms of assembly, PSII is composed of 1 copy each of membrane proteins PsbA, PsbB, PsbC, PsbD, PsbE, PsbF, PsbH, PsbI, PsbJ, PsbK, PsbL, PsbM, PsbT, PsbY, PsbZ, Psb30/Ycf12, at least 3 peripheral proteins of the oxygen-evolving complex and a large number of cofactors. It forms dimeric complexes.

It localises to the plastid. The protein localises to the chloroplast thylakoid membrane. Its function is as follows. May control the interaction of photosystem II (PSII) cores with the light-harvesting antenna, regulates electron flow through the 2 photosystem reaction centers. PSII is a light-driven water plastoquinone oxidoreductase, using light energy to abstract electrons from H(2)O, generating a proton gradient subsequently used for ATP formation. This chain is Photosystem II reaction center protein Z, found in Arabidopsis thaliana (Mouse-ear cress).